Reading from the N-terminus, the 161-residue chain is Cytochrome c-type biogenesis protein CcmE (161 aa).

The Cytoplasmic segment spans residues 1–8 (MNPRRKKR). A helical; Signal-anchor for type II membrane protein transmembrane segment spans residues 9–29 (LTLAVALVFGLGATIGLMLYA). At 30 to 161 (LSQNMDLFYT…SDEQKQGRVQ (132 aa)) the chain is on the periplasmic side. Residues His-129 and Tyr-133 each coordinate heme.

Belongs to the CcmE/CycJ family.

It is found in the cell inner membrane. Functionally, heme chaperone required for the biogenesis of c-type cytochromes. Transiently binds heme delivered by CcmC and transfers the heme to apo-cytochromes in a process facilitated by CcmF and CcmH. This Photobacterium profundum (strain SS9) protein is Cytochrome c-type biogenesis protein CcmE.